The following is a 477-amino-acid chain: MSPQTETKASVGFQAGVKDYKLTYYTPEYETKDTDILAAFRVTPQPGVPPEEAGAAVAAESSTGTWTTVWTDGLTSLDRYKGRCYHIEPVAGEDNQWICYVAYPLDLFEEGSVTNMFTSIVGNVFGFKALRALRLEDLRIPPAYTKTFQGPPHGIQVERDKLNKYGRPLLGCTIKPKLGLSAKNYGRACYECLRGGLDFTKDDENVNSQPFMRWRDRFVFCAEAIYKAQAETGEIKGHYLNATAGTCEEMIKRAVFARELGVPIVMHDYITGGFTANTSLAHYCRDNGLLLHIHRAMHAVIDRQKNHGMHFRVLAKALRMSGGDHIHSGTVVGKLEGEREMTLGFVDLLRDDFIEKDRARGIFFTQDWVSMPGVIPVASGGIHVWHMPALTEIFGDDSVLQFGGGTLGHPWGNAPGAAANRVALEACVQARNEGRDLAREGNEIIREACKWSPELAAACEVWKAIKFEFEPVDTIDE.

Residues 1–2 (MS) constitute a propeptide that is removed on maturation. The residue at position 3 (Pro-3) is an N-acetylproline. Asn-123 and Thr-173 together coordinate substrate. The active-site Proton acceptor is the Lys-175. Position 177 (Lys-177) interacts with substrate. Mg(2+)-binding residues include Lys-201, Asp-203, and Glu-204. Lys-201 bears the N6-carboxylysine mark. His-294 functions as the Proton acceptor in the catalytic mechanism. Substrate contacts are provided by Arg-295, His-327, and Ser-379.

It belongs to the RuBisCO large chain family. Type I subfamily. As to quaternary structure, heterohexadecamer of 8 large chains and 8 small chains; disulfide-linked. The disulfide link is formed within the large subunit homodimers. Mg(2+) serves as cofactor. The disulfide bond which can form in the large chain dimeric partners within the hexadecamer appears to be associated with oxidative stress and protein turnover.

Its subcellular location is the plastid. The protein localises to the chloroplast. The catalysed reaction is 2 (2R)-3-phosphoglycerate + 2 H(+) = D-ribulose 1,5-bisphosphate + CO2 + H2O. It carries out the reaction D-ribulose 1,5-bisphosphate + O2 = 2-phosphoglycolate + (2R)-3-phosphoglycerate + 2 H(+). In terms of biological role, ruBisCO catalyzes two reactions: the carboxylation of D-ribulose 1,5-bisphosphate, the primary event in carbon dioxide fixation, as well as the oxidative fragmentation of the pentose substrate in the photorespiration process. Both reactions occur simultaneously and in competition at the same active site. The chain is Ribulose bisphosphate carboxylase large chain from Avena sativa (Oat).